Reading from the N-terminus, the 245-residue chain is UDP-N-acetyl-D-mannosaminuronic acid transferase (245 aa).

This sequence belongs to the glycosyltransferase 26 family.

The enzyme catalyses UDP-N-acetyl-alpha-D-mannosaminouronate + N-acetyl-alpha-D-glucosaminyl-di-trans,octa-cis-undecaprenyl diphosphate = beta-D-ManNAcA-(1-&gt;4)-alpha-D-GlcNAc-di-trans,octa-cis-undecaprenyl diphosphate + UDP + H(+). It functions in the pathway bacterial outer membrane biogenesis; enterobacterial common antigen biosynthesis. Its function is as follows. Catalyzes the synthesis of Und-PP-GlcNAc-ManNAcA (Lipid II), the second lipid-linked intermediate involved in enterobacterial common antigen (ECA) synthesis. The protein is UDP-N-acetyl-D-mannosaminuronic acid transferase of Photorhabdus laumondii subsp. laumondii (strain DSM 15139 / CIP 105565 / TT01) (Photorhabdus luminescens subsp. laumondii).